The sequence spans 152 residues: Large ribosomal subunit protein uL15 (152 aa).

The disordered stretch occupies residues 1 to 79 (MRLNELSPPP…GRHTPAHPKV (79 aa)). Residues 22-35 (GEGSGYGKTSGRGQ) show a composition bias toward gly residues.

The protein belongs to the universal ribosomal protein uL15 family. As to quaternary structure, part of the 50S ribosomal subunit.

Functionally, binds to the 23S rRNA. This Rubrobacter xylanophilus (strain DSM 9941 / JCM 11954 / NBRC 16129 / PRD-1) protein is Large ribosomal subunit protein uL15.